The chain runs to 615 residues: MEQNPQSQLKLLVTRGKEQGYLTYAEVNDHLPEDIVDSDQIEDIIQMINDMGIQVMEEAPDADDLLLAENTTSTDEDAEEAAAQVLSSVESEIGRTTDPVRMYMREMGTVELLTREGEIDIAKRIEDGINQVQCSVAEYPEAITYLLEQYDRVEAEEARLSDLITGFVDPNAEEEMAPTATHVGSELSQEDLDDDEDEDEEDGDDDAADDDNSIDPELAREKFAELRAQYVVTRDTIKAKGRSHAAAQEEILKLSEVFKQFRLVPKQFDYLVNSMRVMMDRVRTQERLIMKLCVEQCKMPKKNFITLFTGNETSETWFNAAIAMNKPWSEKLHDVAEEVQRCLQKLRQIEEETGLTIEQVKDINRRMSIGEAKARRAKKEMVEANLRLVISIAKKYTNRGLQFLDLIQEGNIGLMKAVDKFEYRRGYKFSTYATWWIRQAITRSIADQARTIRIPVHMIETINKLNRISRQMLQEMGREPTPEELAERMLMPEDKIRKVLKIAKEPISMETPIGDDEDSHLGDFIEDTTLELPLDSATTESLRAATHDVLAGLTAREAKVLRMRFGIDMNTDHTLEEVGKQFDVTRERIRQIEAKALRKLRHPSRSEVLRSFLDD.

The tract at residues Ala-177–Asp-215 is disordered. The segment covering Ser-188–Ile-214 has biased composition (acidic residues). The segment at Met-381 to Thr-451 is sigma-70 factor domain-2. Residues Asp-405–Gln-408 carry the Interaction with polymerase core subunit RpoC motif. The sigma-70 factor domain-3 stretch occupies residues Glu-460–Ser-536. Positions Val-549–His-602 are sigma-70 factor domain-4. A DNA-binding region (H-T-H motif) is located at residues Leu-575–Ala-594.

It belongs to the sigma-70 factor family. RpoD/SigA subfamily. In terms of assembly, interacts transiently with the RNA polymerase catalytic core.

The protein localises to the cytoplasm. In terms of biological role, sigma factors are initiation factors that promote the attachment of RNA polymerase to specific initiation sites and are then released. This sigma factor is the primary sigma factor during exponential growth. This chain is RNA polymerase sigma factor RpoD, found in Salmonella typhi.